The sequence spans 182 residues: Protein transport protein gos1 (182 aa).

Topologically, residues 1-163 (MKSMLLRDSV…RKTSIRRRRD (163 aa)) are cytoplasmic. Residues 164–181 (SIILALLISVLMLLFLFF) form a helical; Anchor for type IV membrane protein membrane-spanning segment. Residue histidine 182 is a topological domain, vesicular.

Belongs to the GOSR1 family. In terms of assembly, component of a SNARE complex consisting of sed5, gos1, ykt6, and sft1.

It is found in the golgi apparatus membrane. Functionally, nonessential SNARE involved in retrograde transport within the Golgi complex. The sequence is that of Protein transport protein gos1 (gos1) from Schizosaccharomyces pombe (strain 972 / ATCC 24843) (Fission yeast).